The following is a 149-amino-acid chain: Deoxyuridine 5'-triphosphate nucleotidohydrolase (149 aa).

Residues 68–70 (RSG), asparagine 81, and 85–87 (LID) each bind substrate.

The protein belongs to the dUTPase family. Mg(2+) is required as a cofactor.

It catalyses the reaction dUTP + H2O = dUMP + diphosphate + H(+). Its pathway is pyrimidine metabolism; dUMP biosynthesis; dUMP from dCTP (dUTP route): step 2/2. Its function is as follows. This enzyme is involved in nucleotide metabolism: it produces dUMP, the immediate precursor of thymidine nucleotides and it decreases the intracellular concentration of dUTP so that uracil cannot be incorporated into DNA. The protein is Deoxyuridine 5'-triphosphate nucleotidohydrolase of Nitrosomonas eutropha (strain DSM 101675 / C91 / Nm57).